The primary structure comprises 120 residues: Large ribosomal subunit protein bL12 (120 aa).

This sequence belongs to the bacterial ribosomal protein bL12 family. As to quaternary structure, homodimer. Part of the ribosomal stalk of the 50S ribosomal subunit. Forms a multimeric L10(L12)X complex, where L10 forms an elongated spine to which 2 to 4 L12 dimers bind in a sequential fashion. Binds GTP-bound translation factors.

Functionally, forms part of the ribosomal stalk which helps the ribosome interact with GTP-bound translation factors. Is thus essential for accurate translation. This chain is Large ribosomal subunit protein bL12, found in Aeromonas salmonicida (strain A449).